The following is a 999-amino-acid chain: Golgin subfamily A member 2 (999 aa).

Over residues 1-11 (MWPPRFPPPRP) the composition is skewed to pro residues. Disordered stretches follow at residues 1–80 (MWPP…PAPP) and 244–288 (ARQK…YNKD). An interaction with p115/USO1 region spans residues 1-86 (MWPPRFPPPR…PAPPTAATDT (86 aa)). Dimethylated arginine is present on residues Arg18 and Arg30. Residues 26-49 (KKKLREYQQKNSPGVPAGAKKKKK) carry the Nuclear localization signal motif. Residues Ser37, Ser66, Ser273, and Ser438 each carry the phosphoserine modification. Residues 147 to 895 (LTSSNMKELE…VLRLVNERNE (749 aa)) are a coiled coil. Positions 271-280 (TLSTVSTQQK) are enriched in polar residues. Positions 444–468 (SQMEEPPPPEPPAGPSEAEEQLQGE) are disordered. The span at 448 to 457 (EPPPPEPPAG) shows a compositional bias: pro residues. 3 positions are modified to phosphoserine: Ser697, Ser934, and Ser978. The interval 989–999 (DENDEVKIMVV) is interaction with GORASP1/GRASP65.

It belongs to the GOLGA2 family. Homodimer, may assemble into homohexamers. Homotetramer; forms a parallel homotetramer with a flexible rod-like structure that can give rise to I- and Y-shaped conformations. Interacts with GORASP1/GRASP65. The homooligomer forms a complex with GORASP1 with a 1:1 stoichiometry. Interacts with RAB1B that has been activated by GTP-binding. Interacts with p115/USO1; interaction with p115/USO1 inhibits interaction with STX5 and/or RAB1B. Interacts with STX5. Interacts with ZFPL1. Interacts with AKAP450/AKAP9; leading to recruit AKAP450/AKAP9 to the cis-Golgi. In terms of processing, phosphorylated at Ser-37 by CDK1 at the onset of mitosis, inhibiting the interaction with p115/USO1 and triggering Golgi disassembly. A report however suggests that Golgi disassembly is independent of phosphorylation at Ser-37. Phosphorylated at Ser-37 in prophase as the Golgi complex starts to break down, and remains phosphorylated during further breakdown and partitioning of the Golgi fragments in metaphase and anaphase. In telophase, GM130 is dephosphorylated by PP2A as the Golgi fragments start to reassemble. Cleaved by caspases at the onset of apoptosis. Post-translationally, methylation by PRMT5 is required for Golgi ribbon formation. As to expression, widely expressed. Detected in brain, kidney, lung, liver, spleen, heart, skeletal muscle, thymus and pancreas. Detected in spermatocytes. Present in oocytes during all oocyte meiotic maturation (at protein level).

Its subcellular location is the golgi apparatus. It is found in the cis-Golgi network membrane. The protein localises to the endoplasmic reticulum-Golgi intermediate compartment membrane. It localises to the cytoplasm. The protein resides in the cytoskeleton. Its subcellular location is the spindle pole. Functionally, peripheral membrane component of the cis-Golgi stack that acts as a membrane skeleton that maintains the structure of the Golgi apparatus, and as a vesicle thether that facilitates vesicle fusion to the Golgi membrane. Required for normal protein transport from the endoplasmic reticulum to the Golgi apparatus and the cell membrane. Together with p115/USO1 and STX5, involved in vesicle tethering and fusion at the cis-Golgi membrane to maintain the stacked and inter-connected structure of the Golgi apparatus. Plays a central role in mitotic Golgi disassembly: phosphorylation at Ser-37 by CDK1 at the onset of mitosis inhibits the interaction with p115/USO1, preventing tethering of COPI vesicles and thereby inhibiting transport through the Golgi apparatus during mitosis. Also plays a key role in spindle pole assembly and centrosome organization. Promotes the mitotic spindle pole assembly by activating the spindle assembly factor TPX2 to nucleate microtubules around the Golgi and capture them to couple mitotic membranes to the spindle: upon phosphorylation at the onset of mitosis, GOLGA2 interacts with importin-alpha via the nuclear localization signal region, leading to recruit importin-alpha to the Golgi membranes and liberate the spindle assembly factor TPX2 from importin-alpha. TPX2 then activates AURKA kinase and stimulates local microtubule nucleation. Upon filament assembly, nascent microtubules are further captured by GOLGA2, thus linking Golgi membranes to the spindle. Regulates the meiotic spindle pole assembly, probably via the same mechanism. Also regulates the centrosome organization. Also required for the Golgi ribbon formation and glycosylation of membrane and secretory proteins. The polypeptide is Golgin subfamily A member 2 (Golga2) (Mus musculus (Mouse)).